A 178-amino-acid polypeptide reads, in one-letter code: Bryoporin (178 aa).

Phosphocholine is bound by residues S51, V83, S102, P104, and Y134. A trp-rich region region spans residues 101–117; that stretch reads WSVPFDYNLYSNWWNIA.

This sequence belongs to the actinoporin family. Plant subfamily.

With respect to regulation, inhibited by sphingomyelin. In terms of biological role, actinoporin-related protein having hemolytic activity in vitro. Binds probably a phosphocholine derivative with the unique amido or hydroxyl groups found in sphingomyelin. Involved in drought tolerance. The polypeptide is Bryoporin (Physcomitrium patens (Spreading-leaved earth moss)).